Consider the following 206-residue polypeptide: VEL1-related protein YOR387C (206 aa).

The first 19 residues, 1–19, serve as a signal peptide directing secretion; the sequence is MSFLNIFTFFSVLVSVATA. 6 N-linked (GlcNAc...) asparagine glycosylation sites follow: N26, N48, N91, N139, N152, and N183.

It belongs to the VEL1 family. In terms of processing, N-glycosylated.

The protein resides in the cytoplasm. The protein localises to the cytosol. The sequence is that of VEL1-related protein YOR387C from Saccharomyces cerevisiae (strain ATCC 204508 / S288c) (Baker's yeast).